A 223-amino-acid polypeptide reads, in one-letter code: RNA-free ribonuclease P (223 aa).

This sequence belongs to the HARP family.

The catalysed reaction is Endonucleolytic cleavage of RNA, removing 5'-extranucleotides from tRNA precursor.. RNA-free RNase P that catalyzes the removal of the 5'-leader sequence from pre-tRNA to produce the mature 5'-terminus. The protein is RNA-free ribonuclease P of Methanococcus maripaludis (strain C7 / ATCC BAA-1331).